A 926-amino-acid polypeptide reads, in one-letter code: Neurofilament medium polypeptide (926 aa).

Positions M1–N10 are enriched in polar residues. Disordered stretches follow at residues M1–S51 and Q79–K102. S2 carries the post-translational modification N-acetylserine. Residues S2–Q104 form a head region. Residues R21–S44 show a composition bias toward low complexity. S30 carries the post-translational modification Phosphoserine. R42 carries the omega-N-methylarginine modification. T47 carries O-linked (GlcNAc) threonine glycosylation. Position 99 is a phosphoserine (S99). The 312-residue stretch at E101–F412 folds into the IF rod domain. Residues I105–L136 are coil 1A. The interval R137–A149 is linker 1. The tract at residues Y150–Q248 is coil 1B. S226 is subject to Phosphoserine. The tract at residues I249–D265 is linker 12. The coil 2A stretch occupies residues I266–Q287. Residues A288 to W291 are linker 2. Positions F292 to F412 are coil 2B. Y320 bears the Phosphotyrosine mark. A phosphoserine mark is found at S346, S418, S430, S468, and S484. Residues S413–D926 form a tail region. The segment at E487–E860 is disordered. Over residues K490–V507 the composition is skewed to acidic residues. Repeat unit 1 spans residues K512 to K516. The 17 X 5 AA approximate tandem repeats of K-S-P-[TVEA]-[AKETP] stretch occupies residues K512–E698. S513 is subject to Phosphoserine. Residues K523–E543 show a composition bias toward acidic residues. Residues A544–K563 show a composition bias toward basic and acidic residues. Phosphoserine is present on residues S547, S555, S560, and S561. Residues E564–A584 are compositionally biased toward acidic residues. T574 carries the phosphothreonine modification. The segment covering A585–K619 has biased composition (basic and acidic residues). 16 repeat units span residues K619–A623, K624–T628, K629–A633, K634–A638, K639–A643, K644–A648, K649–A653, K654–A658, K659–A663, K664–A668, K669–A673, K674–A678, K679–A683, K684–A688, K689–P693, and K694–E698. T628 bears the Phosphothreonine mark. Residues S630, S635, and S640 each carry the phosphoserine modification. T647 carries the phosphothreonine modification. Phosphoserine is present on residues S650 and S655. 2 positions are modified to phosphoserine: S665 and S670. Residues A673–A692 show a composition bias toward low complexity. Residue T677 is modified to Phosphothreonine. A phosphoserine mark is found at S680, S685, S690, S695, S727, S751, S757, S771, S831, and S847. Composition is skewed to basic and acidic residues over residues P696–P764, S771–I811, and T826–G838. Residues G849–E860 show a composition bias toward basic and acidic residues.

Forms heterodimers with NEFL; which can further hetero-oligomerize (in vitro). Forms heterodimers with INA (in vitro). Post-translationally, phosphorylated on a number of serine residues in the repeated K-S-P tripeptide motif. Phosphorylation of NFH may result in the formation of interfilament cross-links that are important in the maintenance of axonal caliber. In terms of processing, phosphorylation seems to play a major role in the functioning of the larger neurofilament polypeptides (NF-M and NF-H), the levels of phosphorylation being altered developmentally and coincidentally with a change in the neurofilament function. Phosphorylated in the head and rod regions by the PKC kinase PKN1, leading to the inhibition of polymerization.

It localises to the cytoplasm. The protein resides in the cytoskeleton. It is found in the cell projection. Its subcellular location is the axon. Neurofilaments usually contain three intermediate filament proteins: NEFL, NEFM, and NEFH which are involved in the maintenance of neuronal caliber. May additionally cooperate with the neuronal intermediate filament proteins PRPH and INA to form neuronal filamentous networks. The chain is Neurofilament medium polypeptide (NEFM) from Bos taurus (Bovine).